The sequence spans 320 residues: Apolipoprotein E (320 aa).

An N-terminal signal peptide occupies residues 1 to 18 (MKVLWAAFLVAFLAGCQG). A run of 8 repeats spans residues 82 to 103 (ALMDETMKELKAYKSELEEQLS), 104 to 125 (PVAEETRARLSKELQAAQARLG), 126 to 147 (ADMEDVRSRLAQYRSEVQAMLG), 148 to 169 (QSTDELRARLASHLRKLRKRLL), 170 to 191 (RDVDDLQKRLAVYQAGAREGAE), 192 to 213 (RGVSAIRERLGPLVEQGRARAA), 214 to 236 (TVGSSLASQPLQERAQAWGERLR), and 237 to 258 (ARMEEVGSRTRDRLDEVKEQVE). Residues 82–199 (ALMDETMKEL…AERGVSAIRE (118 aa)) form an 8 X 22 AA approximate tandem repeats region. Position 145 is a methionine sulfoxide (Met145). Residue Ser149 is modified to Phosphoserine. Positions 160–170 (HLRKLRKRLLR) are LDL and other lipoprotein receptors binding. Heparin is bound at residue 164–167 (LRKR). The tract at residues 212–293 (AATVGSSLAS…SWFEPLVEDM (82 aa)) is lipid-binding and lipoprotein association. 232–239 (GERLRARM) lines the heparin pocket. The interval 269–320 (QQMRLQAEAFQARLKSWFEPLVEDMQRQWAGLVEKVQAAVGASATPVPSDNH) is homooligomerization. The specificity for association with VLDL stretch occupies residues 281-293 (RLKSWFEPLVEDM).

It belongs to the apolipoprotein A1/A4/E family. Homotetramer. May interact with ABCA1; functionally associated with ABCA1 in the biogenesis of HDLs. May interact with APP/A4 amyloid-beta peptide; the interaction is extremely stable in vitro but its physiological significance is unclear. May interact with MAPT. May interact with MAP2. In the cerebrospinal fluid, interacts with secreted SORL1. Interacts with PMEL; this allows the loading of PMEL luminal fragment on ILVs to induce fibril nucleation. In terms of processing, APOE exists as multiple glycosylated and sialylated glycoforms within cells and in plasma. The extent of glycosylation and sialylation are tissue and context specific. Glycated in plasma VLDL. Post-translationally, phosphorylated by FAM20C in the extracellular medium.

The protein localises to the secreted. Its subcellular location is the extracellular space. It is found in the extracellular matrix. The protein resides in the extracellular vesicle. It localises to the endosome. The protein localises to the multivesicular body. In terms of biological role, APOE is an apolipoprotein, a protein associating with lipid particles, that mainly functions in lipoprotein-mediated lipid transport between organs via the plasma and interstitial fluids. APOE is a core component of plasma lipoproteins and is involved in their production, conversion and clearance. Apolipoproteins are amphipathic molecules that interact both with lipids of the lipoprotein particle core and the aqueous environment of the plasma. As such, APOE associates with chylomicrons, chylomicron remnants, very low density lipoproteins (VLDL) and intermediate density lipoproteins (IDL) but shows a preferential binding to high-density lipoproteins (HDL). It also binds a wide range of cellular receptors including the LDL receptor/LDLR, the LDL receptor-related proteins LRP1, LRP2 and LRP8 and the very low-density lipoprotein receptor/VLDLR that mediate the cellular uptake of the APOE-containing lipoprotein particles. Finally, APOE also has a heparin-binding activity and binds heparan-sulfate proteoglycans on the surface of cells, a property that supports the capture and the receptor-mediated uptake of APOE-containing lipoproteins by cells. A main function of APOE is to mediate lipoprotein clearance through the uptake of chylomicrons, VLDLs, and HDLs by hepatocytes. APOE is also involved in the biosynthesis by the liver of VLDLs as well as their uptake by peripheral tissues ensuring the delivery of triglycerides and energy storage in muscle, heart and adipose tissues. By participating in the lipoprotein-mediated distribution of lipids among tissues, APOE plays a critical role in plasma and tissues lipid homeostasis. APOE is also involved in two steps of reverse cholesterol transport, the HDLs-mediated transport of cholesterol from peripheral tissues to the liver, and thereby plays an important role in cholesterol homeostasis. First, it is functionally associated with ABCA1 in the biogenesis of HDLs in tissues. Second, it is enriched in circulating HDLs and mediates their uptake by hepatocytes. APOE also plays an important role in lipid transport in the central nervous system, regulating neuron survival and sprouting. The sequence is that of Apolipoprotein E (APOE) from Saimiri boliviensis boliviensis (Bolivian squirrel monkey).